Reading from the N-terminus, the 75-residue chain is UPF0346 protein LGAS_0911 (75 aa).

Belongs to the UPF0346 family.

In Lactobacillus gasseri (strain ATCC 33323 / DSM 20243 / BCRC 14619 / CIP 102991 / JCM 1131 / KCTC 3163 / NCIMB 11718 / NCTC 13722 / AM63), this protein is UPF0346 protein LGAS_0911.